The chain runs to 580 residues: DNA mismatch repair protein MutL (580 aa).

The protein belongs to the DNA mismatch repair MutL/HexB family.

Its function is as follows. This protein is involved in the repair of mismatches in DNA. It is required for dam-dependent methyl-directed DNA mismatch repair. May act as a 'molecular matchmaker', a protein that promotes the formation of a stable complex between two or more DNA-binding proteins in an ATP-dependent manner without itself being part of a final effector complex. The protein is DNA mismatch repair protein MutL of Chlamydia caviae (strain ATCC VR-813 / DSM 19441 / 03DC25 / GPIC) (Chlamydophila caviae).